A 239-amino-acid chain; its full sequence is Phosphoribosylaminoimidazole-succinocarboxamide synthase (239 aa).

This sequence belongs to the SAICAR synthetase family.

The catalysed reaction is 5-amino-1-(5-phospho-D-ribosyl)imidazole-4-carboxylate + L-aspartate + ATP = (2S)-2-[5-amino-1-(5-phospho-beta-D-ribosyl)imidazole-4-carboxamido]succinate + ADP + phosphate + 2 H(+). It participates in purine metabolism; IMP biosynthesis via de novo pathway; 5-amino-1-(5-phospho-D-ribosyl)imidazole-4-carboxamide from 5-amino-1-(5-phospho-D-ribosyl)imidazole-4-carboxylate: step 1/2. In Dichelobacter nodosus (strain VCS1703A), this protein is Phosphoribosylaminoimidazole-succinocarboxamide synthase.